A 243-amino-acid polypeptide reads, in one-letter code: UPF0246 protein SpyM51747 (243 aa).

It belongs to the UPF0246 family.

This Streptococcus pyogenes serotype M5 (strain Manfredo) protein is UPF0246 protein SpyM51747.